An 842-amino-acid chain; its full sequence is Serine/threonine-protein phosphatase 4 regulatory subunit 3 (842 aa).

In terms of assembly, regulatory subunit 3 (R3) of the histone H2A phosphatase complex (HTP-C) consisting of PPH3, PSY2 and PSY4.

It localises to the nucleus. Its function is as follows. Core regulatory subunit of the histone H2A phosphatase complex, which dephosphorylates H2AS128ph (gamma-H2A) that has been displaced from sites of DNA lesions in the double-stranded DNA break repair process. Dephosphorylation is necessary for efficient recovery from the DNA damage checkpoint. The polypeptide is Serine/threonine-protein phosphatase 4 regulatory subunit 3 (PSY2) (Candida glabrata (strain ATCC 2001 / BCRC 20586 / JCM 3761 / NBRC 0622 / NRRL Y-65 / CBS 138) (Yeast)).